Consider the following 54-residue polypeptide: EVKQESLSGITEGEAKEFHKIFTSSILVFFGVAAFAHLLVWIWRPWVPGPNGYS.

At glutamate 1 to lysine 20 the chain is on the cytoplasmic side. Residues histidine 19 and histidine 37 each coordinate a bacteriochlorophyll. Residues isoleucine 21–tryptophan 43 traverse the membrane as a helical segment. The Periplasmic portion of the chain corresponds to arginine 44–serine 54.

This sequence belongs to the antenna complex beta subunit family. In terms of assembly, the core complex is formed by different alpha and beta chains, binding bacteriochlorophyll molecules, and arranged most probably in tetrameric structures disposed around the reaction center. The non-pigmented gamma chains may constitute additional components.

The protein localises to the cell inner membrane. In terms of biological role, antenna complexes are light-harvesting systems, which transfer the excitation energy to the reaction centers. The protein is Light-harvesting protein B-870 beta chain of Rhodospirillum rubrum.